Here is a 302-residue protein sequence, read N- to C-terminus: Dihydroorotate dehydrogenase B (NAD(+)), catalytic subunit (302 aa).

FMN-binding positions include Ser-23 and Lys-47–Gly-48. Residues Lys-47 and Asn-71 to Leu-75 each bind substrate. 2 residues coordinate FMN: Asn-101 and Asn-128. Asn-128 provides a ligand contact to substrate. The active-site Nucleophile is Cys-131. The FMN site is built by Lys-166 and Ile-192. Asn-193 to Thr-194 serves as a coordination point for substrate. FMN-binding positions include Gly-218, Gly-244 to Gly-245, and Gly-266 to Thr-267.

Belongs to the dihydroorotate dehydrogenase family. Type 1 subfamily. As to quaternary structure, heterotetramer of 2 PyrK and 2 PyrD type B subunits. FMN is required as a cofactor.

It is found in the cytoplasm. The enzyme catalyses (S)-dihydroorotate + NAD(+) = orotate + NADH + H(+). It functions in the pathway pyrimidine metabolism; UMP biosynthesis via de novo pathway; orotate from (S)-dihydroorotate (NAD(+) route): step 1/1. Its function is as follows. Catalyzes the conversion of dihydroorotate to orotate with NAD(+) as electron acceptor. This Alkaliphilus oremlandii (strain OhILAs) (Clostridium oremlandii (strain OhILAs)) protein is Dihydroorotate dehydrogenase B (NAD(+)), catalytic subunit (pyrD).